A 164-amino-acid chain; its full sequence is UPF0304 protein YfbU (164 aa).

Belongs to the UPF0304 family.

The chain is UPF0304 protein YfbU from Salmonella choleraesuis (strain SC-B67).